Here is a 517-residue protein sequence, read N- to C-terminus: Probable anion transporter 6, chloroplastic (517 aa).

Residues 51–73 (TERVRESKKLPPKDPIEDPKPQL) form a disordered region. A compositionally biased stretch (basic and acidic residues) spans 52 to 70 (ERVRESKKLPPKDPIEDPK). 10 consecutive transmembrane segments (helical) span residues 130 to 150 (FGWSSSVAGLVQSSFFWGYAL), 170 to 190 (IGVFTWSFATALVPLLAGFMP), 229 to 249 (FVFGGLSLGSVMGLLLAPPII), 255 to 275 (ESVFYLFGLLGVGWFVGFQFL), 312 to 332 (SFFQSPAVWAMIYTHFCGSWG), 352 to 372 (LTEAAWVSILPPLASIVVTSL), 397 to 417 (IAFVAPAICMTLSSVDIGLPP), 420 to 440 (IVGILTAGLALSSFALSGLYC), 452 to 472 (ILLGITNTVGAVPGIVGVALT), and 484 to 504 (MSLFVPSIFFYLTGTVVWLAF).

This sequence belongs to the major facilitator superfamily. Sodium/anion cotransporter (TC 2.A.1.14) family. In terms of tissue distribution, expressed in leaf veins and sepals.

Its subcellular location is the plastid. The protein resides in the chloroplast membrane. In terms of biological role, inorganic phosphate and probable anion transporter. The sequence is that of Probable anion transporter 6, chloroplastic (ANTR6) from Arabidopsis thaliana (Mouse-ear cress).